We begin with the raw amino-acid sequence, 114 residues long: Ribonuclease P protein component (114 aa).

This sequence belongs to the RnpA family. In terms of assembly, consists of a catalytic RNA component (M1 or rnpB) and a protein subunit.

The catalysed reaction is Endonucleolytic cleavage of RNA, removing 5'-extranucleotides from tRNA precursor.. Functionally, RNaseP catalyzes the removal of the 5'-leader sequence from pre-tRNA to produce the mature 5'-terminus. It can also cleave other RNA substrates such as 4.5S RNA. The protein component plays an auxiliary but essential role in vivo by binding to the 5'-leader sequence and broadening the substrate specificity of the ribozyme. The sequence is that of Ribonuclease P protein component from Exiguobacterium sp. (strain ATCC BAA-1283 / AT1b).